We begin with the raw amino-acid sequence, 207 residues long: Probable GTP-binding protein EngB (207 aa).

One can recognise an EngB-type G domain in the interval 23 to 197 (AGIEVVFAGR…ETVIGRWLFA (175 aa)). Residues 31–38 (GRSNAGKS), 58–62 (GRTQL), 76–79 (DLPG), 143–146 (TKAD), and 176–178 (FSS) each bind GTP. Positions 38 and 60 each coordinate Mg(2+).

This sequence belongs to the TRAFAC class TrmE-Era-EngA-EngB-Septin-like GTPase superfamily. EngB GTPase family. The cofactor is Mg(2+).

Its function is as follows. Necessary for normal cell division and for the maintenance of normal septation. This is Probable GTP-binding protein EngB from Methylobacillus flagellatus (strain ATCC 51484 / DSM 6875 / VKM B-1610 / KT).